A 360-amino-acid polypeptide reads, in one-letter code: Homoserine O-succinyltransferase (360 aa).

The active-site Acyl-thioester intermediate is C146. Substrate-binding residues include K167 and S196. The Proton acceptor role is filled by H239. Residue E241 is part of the active site. R253 lines the substrate pocket.

This sequence belongs to the MetA family.

Its subcellular location is the cytoplasm. The enzyme catalyses L-homoserine + succinyl-CoA = O-succinyl-L-homoserine + CoA. It functions in the pathway amino-acid biosynthesis; L-methionine biosynthesis via de novo pathway; O-succinyl-L-homoserine from L-homoserine: step 1/1. Its function is as follows. Transfers a succinyl group from succinyl-CoA to L-homoserine, forming succinyl-L-homoserine. In vitro, can also use glutaryl-CoA as acyl donor. This Thiothrix nivea (strain ATCC 35100 / DSM 5205 / JP2) protein is Homoserine O-succinyltransferase.